A 102-amino-acid chain; its full sequence is Signal recognition particle 19 kDa protein (102 aa).

This sequence belongs to the SRP19 family. As to quaternary structure, part of the signal recognition particle protein translocation system, which is composed of SRP and FtsY. Archaeal SRP consists of a 7S RNA molecule of 300 nucleotides and two protein subunits: SRP54 and SRP19.

It is found in the cytoplasm. Involved in targeting and insertion of nascent membrane proteins into the cytoplasmic membrane. Binds directly to 7S RNA and mediates binding of the 54 kDa subunit of the SRP. This Saccharolobus solfataricus (strain ATCC 35092 / DSM 1617 / JCM 11322 / P2) (Sulfolobus solfataricus) protein is Signal recognition particle 19 kDa protein.